Reading from the N-terminus, the 168-residue chain is UPF0262 protein BBta_0898 (168 aa).

This sequence belongs to the UPF0262 family.

The chain is UPF0262 protein BBta_0898 from Bradyrhizobium sp. (strain BTAi1 / ATCC BAA-1182).